A 685-amino-acid polypeptide reads, in one-letter code: Probable transketolase (685 aa).

His32 lines the substrate pocket. Thiamine diphosphate contacts are provided by residues His72 and 121–123; that span reads GPL. Position 162 (Asp162) interacts with Mg(2+). Positions 163 and 192 each coordinate thiamine diphosphate. 2 residues coordinate Mg(2+): Asn192 and Ile194. His268, Arg363, and Ser390 together coordinate substrate. A thiamine diphosphate-binding site is contributed by His268. 2 residues coordinate thiamine diphosphate: Glu422 and Phe448. Glu422 serves as the catalytic Proton donor. The substrate site is built by His472, Asp480, and Arg531.

Belongs to the transketolase family. As to quaternary structure, homodimer. Mg(2+) is required as a cofactor. Requires Ca(2+) as cofactor. The cofactor is Mn(2+). It depends on Co(2+) as a cofactor. Thiamine diphosphate serves as cofactor.

The catalysed reaction is D-sedoheptulose 7-phosphate + D-glyceraldehyde 3-phosphate = aldehydo-D-ribose 5-phosphate + D-xylulose 5-phosphate. Its function is as follows. Catalyzes the transfer of a two-carbon ketol group from a ketose donor to an aldose acceptor, via a covalent intermediate with the cofactor thiamine pyrophosphate. This chain is Probable transketolase, found in Schizosaccharomyces pombe (strain 972 / ATCC 24843) (Fission yeast).